Reading from the N-terminus, the 62-residue chain is uncharacterized protein (62 aa).

Transmembrane regions (helical) follow at residues 7-27 (LLLL…VFIA) and 34-51 (IIAS…GFTL).

The protein localises to the cell membrane. This is an uncharacterized protein from Bacillus subtilis (strain 168).